The chain runs to 341 residues: Large ribosomal subunit protein uL10 (341 aa).

The disordered stretch occupies residues 301–341 (EAAPAAAPAAEEKAEEEKKEEEEEKKEDQELSGLDSIFGGF).

Belongs to the universal ribosomal protein uL10 family. Part of the 50S ribosomal subunit. Forms part of the ribosomal stalk which helps the ribosome interact with GTP-bound translation factors. Forms a heptameric L10(L12)2(L12)2(L12)2 complex, where L10 forms an elongated spine to which the L12 dimers bind in a sequential fashion.

In terms of biological role, forms part of the ribosomal stalk, playing a central role in the interaction of the ribosome with GTP-bound translation factors. In Aeropyrum pernix (strain ATCC 700893 / DSM 11879 / JCM 9820 / NBRC 100138 / K1), this protein is Large ribosomal subunit protein uL10.